A 256-amino-acid polypeptide reads, in one-letter code: Ciliary microtubule associated protein 1A (256 aa).

3 STPGR repeats span residues 66–92 (PGPG…IYGR), 181–206 (PGPG…MTAR), and 217–242 (PGPG…FGIR).

Belongs to the CIMAP family.

It is found in the cytoplasm. The protein localises to the cytoskeleton. The protein resides in the flagellum axoneme. Outer dense fibers are filamentous structures located on the outside of the axoneme in the midpiece and principal piece of the mammalian sperm tail. May help to maintain the passive elastic structures and elastic recoil of the sperm tail. This chain is Ciliary microtubule associated protein 1A (cimap1a), found in Xenopus tropicalis (Western clawed frog).